The chain runs to 349 residues: Ribosomal RNA small subunit methyltransferase H 2 (349 aa).

Residues 80–82, aspartate 100, phenylalanine 130, aspartate 149, and glutamine 156 contribute to the S-adenosyl-L-methionine site; that span reads GGH.

Belongs to the methyltransferase superfamily. RsmH family.

It localises to the cytoplasm. It catalyses the reaction cytidine(1402) in 16S rRNA + S-adenosyl-L-methionine = N(4)-methylcytidine(1402) in 16S rRNA + S-adenosyl-L-homocysteine + H(+). Specifically methylates the N4 position of cytidine in position 1402 (C1402) of 16S rRNA. The protein is Ribosomal RNA small subunit methyltransferase H 2 of Alkaliphilus metalliredigens (strain QYMF).